The sequence spans 165 residues: Deoxyuridine 5'-triphosphate nucleotidohydrolase (165 aa).

It belongs to the dUTPase family. In terms of assembly, homotrimer. Mg(2+) is required as a cofactor.

It localises to the host cytoplasm. Its subcellular location is the virion. It carries out the reaction dUTP + H2O = dUMP + diphosphate + H(+). Functionally, the viral dUTPase may play a role in lowering the dUTP concentration in natural infections to minimize misincorporation of deoxyuridine into the viral DNA and ensure the fidelity of genome replication. This is Deoxyuridine 5'-triphosphate nucleotidohydrolase from Ornithodoros (relapsing fever ticks).